We begin with the raw amino-acid sequence, 115 residues long: MDIFKKIEREQMRLDIPSFKSGDTIKVYFRIVEGEKERIQVFQGNVIRIHRGTTNATITVRKISDGVGVERIVPLHSPLVDHIEVVSEGRVRRSRLYYLRNLRGNAARIKPKKIY.

Belongs to the bacterial ribosomal protein bL19 family.

In terms of biological role, this protein is located at the 30S-50S ribosomal subunit interface and may play a role in the structure and function of the aminoacyl-tRNA binding site. The sequence is that of Large ribosomal subunit protein bL19 from Lawsonia intracellularis (strain PHE/MN1-00).